The chain runs to 681 residues: DNA ligase (681 aa).

NAD(+)-binding positions include D45–D49, S94–L95, and E120. The N6-AMP-lysine intermediate role is filled by K122. NAD(+)-binding residues include R143, E177, K289, and K313. Residues C403, C406, C421, and C426 each contribute to the Zn(2+) site. Residues S593 to I681 enclose the BRCT domain.

It belongs to the NAD-dependent DNA ligase family. LigA subfamily. Mg(2+) serves as cofactor. It depends on Mn(2+) as a cofactor.

The catalysed reaction is NAD(+) + (deoxyribonucleotide)n-3'-hydroxyl + 5'-phospho-(deoxyribonucleotide)m = (deoxyribonucleotide)n+m + AMP + beta-nicotinamide D-nucleotide.. Its function is as follows. DNA ligase that catalyzes the formation of phosphodiester linkages between 5'-phosphoryl and 3'-hydroxyl groups in double-stranded DNA using NAD as a coenzyme and as the energy source for the reaction. It is essential for DNA replication and repair of damaged DNA. This is DNA ligase from Leptospira borgpetersenii serovar Hardjo-bovis (strain JB197).